Consider the following 717-residue polypeptide: MEDLGENTTVLSTLRSLNNFISQRVEGGSGLDVSTAAPGSLQLQYEQSMQLEERAEQIRSKSYLIQMEREKMQMELSHKRARVELERAANTSARNYEREVDRNQELLARIRQLQEREAAAEEKMQEQLERHRLCKQSLDAASQQLREREDGLAAARETISSLKGRVSEMQLNAMDQKVQVKRLESEKQELKEQLELQQRKCQEASQKIQELQASQEERADHEQKIKDLEQKLCLQEQDAAVVKNMKSELLRLPRMERELKRLREENTHLREMKETNGLLTEELEGLQRKLGRQEKMQEALVDLELEKEKLLAKLQSWEKLDQTMGVNLRTPEDLSRFVVELQQRELTLKEKNNTITSSARGLEKAQQQLQDEVRQVSAQLLEERKKREIHEALARRLQKRIVLLTKERDGMRAILGSYDSELTQAEYSAQLTQRMWEAEDMVQKVHAHSSEMETQLSQALEELGVQKQRADTLEMELKMLRAQTSSAETSFPFCKEEVDALRLKVEELEGERSRLEQEKQALEMQMERLTLQGDYNQSRTKVLHMSLNPASMARKRQQEDHARLQGECERLRGLVHALERGGPIPADLEVASSLPSSKEVAELRKQVESAELKNQRLKEVFQTKIQEFRKVCYTLTGYQIDVTTENQYRLTSRYAEHQSDCLIFKATGPSGSKMQLLETEFSRSVPELIELHLLQQDSIPAFLSALTIELFSRQTSI.

Met-1 bears the N-acetylmethionine mark. Ser-16 is modified (phosphoserine). Residues 46–631 (EQSMQLEERA…QTKIQEFRKV (586 aa)) are a coiled coil. Lys-61 is subject to N6-acetyllysine; alternate. Residue Lys-61 forms a Glycyl lysine isopeptide (Lys-Gly) (interchain with G-Cter in SUMO2); alternate linkage. A Nuclear localization signal motif is present at residues 79-82 (KRAR). Ser-214 and Ser-428 each carry phosphoserine. Residues 380–532 (LLEERKKREI…EMQMERLTLQ (153 aa)) form a necessary for interaction with NEK2 region. The necessary for interaction with MAD2L1 stretch occupies residues 540 to 551 (TKVLHMSLNPAS).

Belongs to the MAD1 family. Homodimer. Dimerizes via its N- and C- terminal regions. Heterodimerizes with MAD2L1 in order to form a tetrameric MAD1L1-MAD2L1 core complex. Interacts with the closed conformation form of MAD2L1 (C-MAD2) and open conformation form of MAD2L1 (O-MAD2). It is unclear whether MAD1L1 dimerization promotes the conversion of closed to open conformation of MAD2L1. Formation of a heterotetrameric core complex containing two molecules each of MAD1L1 and of MAD2L1 promotes binding of another molecule of MAD2L1 to each MAD2L1, resulting in a heterohexamer. Perturbation of the original MAD1L1-MAD2L1 structure by the spindle checkpoint may decrease MAD2L1 affinity for MAD1L1. CDC20 can compete with MAD1L1 for MAD2L1 binding, until the attachment and/or tension dampen the checkpoint signal, preventing further release of MAD2L1 on to CDC20. Also able to interact with the BUB1/BUB3 complex. Interacts with NEK2. Interacts with TTK. Interacts with TPR; the interactions occurs in a microtubule-independent manner. Interacts with IK. Interacts with the viral Tax protein. Interacts with PRAP1. Phosphorylated; by BUB1. Become hyperphosphorylated in late S through M phases or after mitotic spindle damage.

It localises to the nucleus. The protein resides in the chromosome. Its subcellular location is the centromere. It is found in the kinetochore. The protein localises to the nucleus envelope. It localises to the cytoplasm. The protein resides in the cytoskeleton. Its subcellular location is the microtubule organizing center. It is found in the centrosome. The protein localises to the spindle. It localises to the spindle pole. Functionally, component of the spindle-assembly checkpoint that prevents the onset of anaphase until all chromosomes are properly aligned at the metaphase plate. Forms a heterotetrameric complex with the closed conformation form of MAD2L1 (C-MAD2) at unattached kinetochores during prometaphase, recruits an open conformation of MAD2L1 (O-MAD2) and promotes the conversion of O-MAD2 to C-MAD2, which ensures mitotic checkpoint signaling. The protein is Mitotic spindle assembly checkpoint protein MAD1 (MAD1L1) of Cricetulus griseus (Chinese hamster).